Consider the following 357-residue polypeptide: UDP-N-acetylglucosamine--N-acetylmuramyl-(pentapeptide) pyrophosphoryl-undecaprenol N-acetylglucosamine transferase (357 aa).

UDP-N-acetyl-alpha-D-glucosamine is bound by residues 7–9, N119, R159, S187, I241, and Q286; that span reads TGG.

The protein belongs to the glycosyltransferase 28 family. MurG subfamily.

The protein resides in the cell inner membrane. It catalyses the reaction di-trans,octa-cis-undecaprenyl diphospho-N-acetyl-alpha-D-muramoyl-L-alanyl-D-glutamyl-meso-2,6-diaminopimeloyl-D-alanyl-D-alanine + UDP-N-acetyl-alpha-D-glucosamine = di-trans,octa-cis-undecaprenyl diphospho-[N-acetyl-alpha-D-glucosaminyl-(1-&gt;4)]-N-acetyl-alpha-D-muramoyl-L-alanyl-D-glutamyl-meso-2,6-diaminopimeloyl-D-alanyl-D-alanine + UDP + H(+). Its pathway is cell wall biogenesis; peptidoglycan biosynthesis. Functionally, cell wall formation. Catalyzes the transfer of a GlcNAc subunit on undecaprenyl-pyrophosphoryl-MurNAc-pentapeptide (lipid intermediate I) to form undecaprenyl-pyrophosphoryl-MurNAc-(pentapeptide)GlcNAc (lipid intermediate II). The chain is UDP-N-acetylglucosamine--N-acetylmuramyl-(pentapeptide) pyrophosphoryl-undecaprenol N-acetylglucosamine transferase from Nitrosomonas europaea (strain ATCC 19718 / CIP 103999 / KCTC 2705 / NBRC 14298).